The chain runs to 479 residues: mRNA export factor ICP27 homolog (479 aa).

The segment covering methionine 1 to serine 15 has biased composition (low complexity). Disordered stretches follow at residues methionine 1–valine 77 and lysine 91–tryptophan 210. Residues threonine 35–glycine 44 show a composition bias toward acidic residues. The tract at residues aspartate 61–histidine 146 is nuclear export signal and interaction with host NXF1. The segment at lysine 127 to arginine 130 is nuclear localization signal. Residues glutamate 132–glycine 142 are compositionally biased toward basic and acidic residues. Residues lysine 143–arginine 145 form a nuclear localization signal region. Residues cysteine 354, histidine 445, cysteine 449, and cysteine 454 each coordinate Zn(2+). Residues cysteine 354–cysteine 454 form a CHC2-type zinc finger.

Belongs to the HHV-1 ICP27 protein family. As to quaternary structure, interacts with host XPO1 and with the XPO1 export pathway components small GTPase RAN and nucleoporin NUP214. Interacts with host SPEN, OTT1 and OTT3. Interacts with host SRSF1, SRSF3, SRSF7 and SRPK1. Interacts with host DHX9; this interaction may have an inhibitory effect on virion production. Interacts (via N-terminus) with host NXF1; this interaction plays a role in mRNA export. Phosphorylated by cellular protein kinase CK2.

It is found in the host nucleus. The protein localises to the host cytoplasm. Promotes the nuclear export of a subset of early and late viral mRNAs by interacting with mRNAs and cellular export proteins. Additionally may prevent the establishment of cellular antiviral state, by acting as an alternative splicing factor for cellular RNAs such as STAT1, resulting in a STAT1 mRNA incapable of producing the STAT1alpha isoform. In Homo sapiens (Human), this protein is mRNA export factor ICP27 homolog.